Consider the following 311-residue polypeptide: Beta-ketoacyl-[acyl-carrier-protein] synthase III (311 aa).

Residues C114 and H238 contribute to the active site. Positions 239 to 243 (QANIR) are ACP-binding. The active site involves N268.

This sequence belongs to the thiolase-like superfamily. FabH family. Homodimer.

It localises to the cytoplasm. The enzyme catalyses malonyl-[ACP] + acetyl-CoA + H(+) = 3-oxobutanoyl-[ACP] + CO2 + CoA. The protein operates within lipid metabolism; fatty acid biosynthesis. Its function is as follows. Catalyzes the condensation reaction of fatty acid synthesis by the addition to an acyl acceptor of two carbons from malonyl-ACP. Catalyzes the first condensation reaction which initiates fatty acid synthesis and may therefore play a role in governing the total rate of fatty acid production. Possesses both acetoacetyl-ACP synthase and acetyl transacylase activities. Its substrate specificity determines the biosynthesis of branched-chain and/or straight-chain of fatty acids. This Neorickettsia sennetsu (strain ATCC VR-367 / Miyayama) (Ehrlichia sennetsu) protein is Beta-ketoacyl-[acyl-carrier-protein] synthase III.